The sequence spans 85 residues: Small ribosomal subunit protein uS17 (85 aa).

The protein belongs to the universal ribosomal protein uS17 family. Part of the 30S ribosomal subunit.

Its function is as follows. One of the primary rRNA binding proteins, it binds specifically to the 5'-end of 16S ribosomal RNA. The polypeptide is Small ribosomal subunit protein uS17 (Anaeromyxobacter sp. (strain Fw109-5)).